The following is a 91-amino-acid chain: MEARDVLKRPVITEKSSAAMAEDKYTFDVDTRANKTQVKIAVEEIFDVKVDNVNIINYKPKKKRMGRYQGYTNKKRVAIVKLKEGSIDLFN.

This sequence belongs to the universal ribosomal protein uL23 family. As to quaternary structure, part of the 50S ribosomal subunit. Contacts protein L29, and trigger factor when it is bound to the ribosome.

One of the early assembly proteins it binds 23S rRNA. One of the proteins that surrounds the polypeptide exit tunnel on the outside of the ribosome. Forms the main docking site for trigger factor binding to the ribosome. In Staphylococcus saprophyticus subsp. saprophyticus (strain ATCC 15305 / DSM 20229 / NCIMB 8711 / NCTC 7292 / S-41), this protein is Large ribosomal subunit protein uL23.